The primary structure comprises 89 residues: MHNVNLLNQAGLENALESVGCLDIVEDLIEKMQEYVLYHTETAERFAIDIFTVVNNYTKKVHAIFNVLENEDGETNVKNVEFEVMHFTE.

This is an uncharacterized protein from Bacillus subtilis (strain 168).